The primary structure comprises 403 residues: Aminomethyltransferase, mitochondrial (403 aa).

Residues 1–28 (MQRAVSVVARLGFRLQAFPPALCRPLSC) constitute a mitochondrion transit peptide. Positions 232, 261, and 399 each coordinate substrate.

The protein belongs to the GcvT family. As to quaternary structure, the glycine cleavage system is composed of four proteins: P, T, L and H.

It localises to the mitochondrion. The enzyme catalyses N(6)-[(R)-S(8)-aminomethyldihydrolipoyl]-L-lysyl-[protein] + (6S)-5,6,7,8-tetrahydrofolate = N(6)-[(R)-dihydrolipoyl]-L-lysyl-[protein] + (6R)-5,10-methylene-5,6,7,8-tetrahydrofolate + NH4(+). In terms of biological role, the glycine cleavage system catalyzes the degradation of glycine. The polypeptide is Aminomethyltransferase, mitochondrial (Homo sapiens (Human)).